The following is a 360-amino-acid chain: MIEDTMTLLSLLGRIMRYFLLRPETLFLLCISLALWSYFFHTDEVKTIVKSSRDAVKMVKGKVAEIMQNDRLGGLDVLEAEFSKTWEFKNHNVAVYSIQGRRDHMEDRFEVLTDLANKTHPSIFGIFDGHGGETAAEYVKSRLPEALKQHLQDYEKDKENSVLSYQTILEQQILSIDREMLEKLTVSYDEAGTTCLIALLSDKDLTVANVGDSRGVLCDKDGNAIPLSHDHKPYQLKERKRIKRAGGFISFNGSWRVQGILAMSRSLGDYPLKNLNVVIPDPDILTFDLDKLQPEFMILASDGLWDAFSNEEAVRFIKERLDEPHFGAKSIVLQSFYRGCPDNITVMVVKFRNSSKTEEQ.

The Extracellular portion of the chain corresponds to 1-25 (MIEDTMTLLSLLGRIMRYFLLRPET). Residues 26-42 (LFLLCISLALWSYFFHT) form a helical membrane-spanning segment. Topologically, residues 43–360 (DEVKTIVKSS…FRNSSKTEEQ (318 aa)) are cytoplasmic. One can recognise a PPM-type phosphatase domain in the interval 92 to 351 (NVAVYSIQGR…DNITVMVVKF (260 aa)). Residues D128, G129, D302, and D342 each contribute to the Mn(2+) site.

This sequence belongs to the PP2C family. As to quaternary structure, interacts with MAP3K7/TAK1. Interacts with MAP3K5. Mg(2+) serves as cofactor. Requires Mn(2+) as cofactor. In terms of tissue distribution, ubiquitous. Highly expressed in heart, placenta, lung, liver, kidney and pancreas.

It is found in the membrane. The catalysed reaction is O-phospho-L-seryl-[protein] + H2O = L-seryl-[protein] + phosphate. The enzyme catalyses O-phospho-L-threonyl-[protein] + H2O = L-threonyl-[protein] + phosphate. In terms of biological role, acts as a suppressor of the SAPK signaling pathways by associating with and dephosphorylating MAP3K7/TAK1 and MAP3K5, and by attenuating the association between MAP3K7/TAK1 and MAP2K4 or MAP2K6. The protein is Protein phosphatase 1L (PPM1L) of Homo sapiens (Human).